We begin with the raw amino-acid sequence, 780 residues long: Alpha-xylosidase (780 aa).

N-linked (GlcNAc...) asparagine glycosylation is found at asparagine 48, asparagine 84, asparagine 247, and asparagine 298. Catalysis depends on residues aspartate 434 and glutamate 437. Asparagine 443 carries an N-linked (GlcNAc...) asparagine glycan. Catalysis depends on aspartate 501, which acts as the Proton donor. Asparagine 718 carries N-linked (GlcNAc...) asparagine glycosylation.

Belongs to the glycosyl hydrolase 31 family.

Its subcellular location is the secreted. It carries out the reaction Hydrolysis of terminal, non-reducing alpha-D-xylose residues with release of alpha-D-xylose.. Catalyzes the liberation of alpha-xylose from the non-reducing terminal glucose of xyloglucan oligosaccharides. The polypeptide is Alpha-xylosidase (Emericella nidulans (strain FGSC A4 / ATCC 38163 / CBS 112.46 / NRRL 194 / M139) (Aspergillus nidulans)).